The primary structure comprises 401 residues: L-rhamnonate dehydratase (401 aa).

Substrate is bound by residues His29 and Arg55. The Mg(2+) site is built by Asp222, Glu248, and Glu276. The Proton acceptor role is filled by His325. Residue Glu345 coordinates substrate.

Belongs to the mandelate racemase/muconate lactonizing enzyme family. RhamD subfamily. Homooctamer; tetramer of dimers. Requires Mg(2+) as cofactor.

The catalysed reaction is L-rhamnonate = 2-dehydro-3-deoxy-L-rhamnonate + H2O. Catalyzes the dehydration of L-rhamnonate to 2-keto-3-deoxy-L-rhamnonate (KDR). This Salmonella heidelberg (strain SL476) protein is L-rhamnonate dehydratase.